The following is a 1191-amino-acid chain: Major DNA-binding protein (1191 aa).

The short motif at 820 to 821 (FW) is the Required for filament formation element. Disordered regions lie at residues 1122-1146 (TAAGSAAGGGGSATEGGGGGAAADE) and 1168-1191 (AGLINGDDVRGDDEFELPSKRSRL). A compositionally biased stretch (gly residues) spans 1127–1142 (AAGGGGSATEGGGGGA). The segment at 1173 to 1191 (GDDVRGDDEFELPSKRSRL) is required for nuclear localization.

Belongs to the herpesviridae major DNA-binding protein family. Homooligomers. Forms double-helical filaments necessary for the formation of replication compartments within the host nucleus. Interacts with the origin-binding protein. Interacts with the helicase primase complex; this interaction stimulates primer synthesis activity of the helicase-primase complex. Interacts with the DNA polymerase. Interacts with the alkaline exonuclease; this interaction increases its nuclease processivity.

It is found in the host nucleus. In terms of biological role, single-stranded DNA-binding protein required for DNA replication. Plays several crucial roles in viral infection. Participates in the opening of the viral DNA origin to initiate replication by interacting with the origin-binding protein. May disrupt loops, hairpins and other secondary structures present on ssDNA to reduce and eliminate pausing of viral DNA polymerase at specific sites during elongation. Promotes viral DNA recombination by performing strand-transfer, characterized by the ability to transfer a DNA strand from a linear duplex to a complementary single-stranded DNA circle. Can also catalyze the renaturation of complementary single strands. Additionally, reorganizes the host cell nucleus, leading to the formation of prereplicative sites and replication compartments. This process is driven by the protein which can form double-helical filaments in the absence of DNA. The polypeptide is Major DNA-binding protein (Mus musculus (Mouse)).